The primary structure comprises 370 residues: Platelet-derived growth factor D (370 aa).

Positions 1–23 (MQRLVLVSILLCANFSCYPDTFA) are cleaved as a signal peptide. The 119-residue stretch at 52–170 (REENIQVTSN…PGFKIYYSFV (119 aa)) folds into the CUB domain. Cysteine 109 and cysteine 131 are disulfide-bonded. Residue asparagine 276 is glycosylated (N-linked (GlcNAc...) asparagine). Disulfide bonds link cysteine 302/cysteine 360 and cysteine 306/cysteine 362.

Belongs to the PDGF/VEGF growth factor family. As to quaternary structure, homodimer; disulfide-linked. Interacts with PDGFRB homodimers, and with heterodimers formed by PDGFRA and PDGFRB. In terms of processing, activated by proteolytic cleavage. Proteolytic removal of the N-terminal CUB domain releasing the core domain is necessary for unmasking the receptor-binding epitopes of the core domain. Cleavage after Arg-247 or Arg-249 by urokinase plasminogen activator gives rise to the active form. As to expression, expressed at high levels in developing heart, lung, kidney and some muscle derivatives. Moderately expressed in liver, brain and testis. In the kidney, localized to glomerular mesangial cells and vascular smooth muscle cells. Up-regulated in areas of renal fibrosis. In mice with unilateral ureteral obstruction, expressed in interstitial cells at day 4, with an increased to maximal expression at day 14.

It is found in the secreted. Growth factor that plays an essential role in the regulation of embryonic development, cell proliferation, cell migration, survival and chemotaxis. Potent mitogen for cells of mesenchymal origin. Plays an important role in wound healing. Has oncogenic potential and can induce tumor formation. Induces macrophage recruitment, increased interstitial pressure, and blood vessel maturation during angiogenesis. Can initiate events that lead to a mesangial proliferative glomerulonephritis, including influx of monocytes and macrophages and production of extracellular matrix. This is Platelet-derived growth factor D (Pdgfd) from Mus musculus (Mouse).